The sequence spans 1126 residues: Protein translocase subunit SecA (1126 aa).

Residues Q175, 193–197, and D694 each bind ATP; that span reads GEGKT. Positions 1060–1126 are disordered; that stretch reads VQEAAPEKHE…KYKNCHGQGL (67 aa). Residues 1064–1080 are compositionally biased toward basic and acidic residues; sequence APEKHEDMSRYRTEKTD. Zn(2+)-binding residues include C1110, C1112, C1121, and H1122.

The protein belongs to the SecA family. In terms of assembly, monomer and homodimer. Part of the essential Sec protein translocation apparatus which comprises SecA, SecYEG and auxiliary proteins SecDF. Other proteins may also be involved. Zn(2+) serves as cofactor.

It localises to the cell inner membrane. It is found in the cytoplasm. It catalyses the reaction ATP + H2O + cellular proteinSide 1 = ADP + phosphate + cellular proteinSide 2.. Part of the Sec protein translocase complex. Interacts with the SecYEG preprotein conducting channel. Has a central role in coupling the hydrolysis of ATP to the transfer of proteins into and across the cell membrane, serving as an ATP-driven molecular motor driving the stepwise translocation of polypeptide chains across the membrane. The sequence is that of Protein translocase subunit SecA from Parabacteroides distasonis (strain ATCC 8503 / DSM 20701 / CIP 104284 / JCM 5825 / NCTC 11152).